A 562-amino-acid polypeptide reads, in one-letter code: Arginine--tRNA ligase (562 aa).

The short motif at 121–131 (PNIAKPMGMGH) is the 'HIGH' region element.

The protein belongs to the class-I aminoacyl-tRNA synthetase family. As to quaternary structure, monomer.

The protein resides in the cytoplasm. The catalysed reaction is tRNA(Arg) + L-arginine + ATP = L-arginyl-tRNA(Arg) + AMP + diphosphate. The protein is Arginine--tRNA ligase of Limosilactobacillus reuteri (strain DSM 20016) (Lactobacillus reuteri).